The following is a 2904-amino-acid chain: MSSSASFNEPIAIVGSGCRFAGGASSPSKLWDLLCKPKDIRSDITGRRFNAEGFYHPDGSHHGHMNVLQSYLLEEDTRLFDAEFFGTNPVEAKAMDPQQRLLLEVVYESIESAGLCIERLRGSNTAVFAGLMCGDYEAMMLRDLDQAPTHFATGTSRAVMSNRVSYFFDWRGPSVTIDTACSSSLVAVHYAIQALRSGDSHTAVACGSNLIFGPEMYVIESKLKMLSPDGLGRMWDKDANGYARGEGVTAIILKTLSQALADNDRIEAVIRETGVNSDGTTPGITMPSASAQRDLIQSVYRKAGLDPEAMEDRPQYIEAHGTGTPAGDPIEAEALSTAFFGNTEKASTPIYTGSIKTVLGHTEGSAGIAALMKVTQAIRNAILPPNLWFQQLNPKLKQFYGNLQIPTQALPWPTVSDRRPKRASINNFGFGGTNAHAIVESYEPEPRQTVESPDAATVSTPFVFSAASTESLRSNLAAYATYLDANPKTSAGDLAYTLRERRSVLPFRIAFPDTTVESLKLSITTRLVEPGNESLGVRTWTAGNRGRSRLLGVFTGQGAQYARMGAELVNQAVLAGQLLEKLEGYLSELPEGDRPSWSLRDEMLADGPLSHVGEAAISQPLCTAVQIILVDLLKSAKVKFDTVVGHSSGEIGAAYAAGYLSARDALLIAYFRGLHCKHATSPNGDIKGAMLAAGTSMEDAIEICEAEEFLGRVTVAASNSSSSVTFSGDEDAIDEIAAVLQDENKFNRRLKVDTAYHSSHMLPCFDLYVASLRRAGVKALLGNGECTWISSVYEGRSIDPSTDELSGVYWAHNMTKAVLFSQAVRAAVKIATDNDPYTAVLEVGPHAALAGPAKQNIFEALQKELPYHGTLLRGGNAMTAFSTCLGFLWTHLDTASIDLGSCEAAHSGNKQQFTVLGDLPSYQWKHESAYWAESRKSRQMRLRNQPFHQLLGDVSPDSAPHILRWKNILKPREMTWLEGHQVQSQVVLPAASYVSTAIEAAQSLASGKKIQLIELSNFHIHNAITFDQNDIGIEVHIEVSNIYIKENQVHANFTYSAALGDELNDLVLAANGELKVVLVDETPNISLFPQRQAPPPHMIPVQPSRLYGFMKGLEYDFSGAFQSLIKLERNLGHATCLAQKAKVLVPDADELLVHPIDLDAAFQSVMLAYSYPGDDQLRLLHLPTSIAKLRVNPSVLASQRYAENDMTLIDSTCSTGDRAEPGDGFSGSVNMYAPGFDHAAIQVDRVKFKPVGSDASNDRDVFYKMHWVPSAADGMLAAASVLVGEQDRELMFVLSRIAAYYLRIFDEQLPENDPARSTSPLCHYMNYARHMTNLLKNGQHQWAHQDWLNDTEEDVLDDIVAKGFMENSDVKIMLLVGNTMPRVFKGETTMLEHFRTSGLLDEYYSNGFGTKQSTLWVASILKQLTDRNPHLNMLEIGAGTGGATKTILQSIGHDFGSYTFTDISSSFFENAAETFSDWQDSMVFKVCNAEIDPVQQGFQHGSYDVVIAFMVVHACARLDEAVANLRKLLKPGGLLVLGEGASDGAMQAGAGFIFGTLPGWWRGADEGRTLSPLVNASEWDVILKGSGFSGIDTMSPPTLFNAFGITLFVSTAIDERIEFARNPLAITKSTVYNKVVIVGGRTPPIVQLSREIQEALIPLAKQVLSYASLEDLDENTLEDETVVVSLVDLEAPVFKGITSERWYKFRKLFETKRDILWLTSGRLEDEPYCNMTVGFGRSAMHEEETLRIQYVDVTNVGNFDAQKIAQYLLRFTSARLDDKDILYTKEPEIIIDDEGRELVPRLFTIKASNDRLNSTTRSIFDPVDINKHVVELQYGKDGPNFRQLSRYELSEEPTTPQSDHAELRLTSSTVSAIRCPTGYQFLVVGTDQTGAQRLALTSSLTSLLRIPLESTVLCEHPGLSEANYLGLVAAELSVIAFCDSLFTGQKLAVHNAPASIVRAVLSHVSPKGLSVTFTTDTLGTAVSPDVASQIHIPMFSARSDIEAILPSDIVCFVDFSASIQAENVAMITSCLPSYCRKENVNTIFSPHGIDTSASTAVLGQLLNRAVNIVKERNVSTTPTLLGLKALAHGESGTDPLTIIEWTGCTTVPARVTRFESNQLFKSHKTYWLVGLSGALGISLCDWMIERGVRYLVLTSRNPKIDPRWIRNHERNGVTIKIMLCDVTDEKAINEVHAEIVKTLPPIVGLLNGAMVLRDVSVRNMEFDQVTDVIRPKVLGSIHLDRIFYNIDLDFFVLLSSINCVIGNVGQANYAAANMGMIGVAGNRRKRGLRSSVVNVGAIIGVGYITQSDRQLDVTVAKTAMMHLSEQDFHQIFAECMEASHLDSPNGPEISTGLLSITPETIDIPPWYSDPKFARFRVHKAADTGDKSDATNSASTQDLLQACRSQIEVANVIKQAYCTQLRKMLQVSTVDGDLMMMRGVDLGFDSLLSVDVRSWFLKNFRVSIPVLKIMANDVRMSSLVELAAESIPAELVPGVPQANANPNGPSSPDSDATESSNQNSDVDVTSTRATSPSTPAATSPDSNVKIKTNSSFAVDWKFETIPPEPFALPGLSDAPKPRENPEVVVLTGCSGLLGHHLLNTLIAQPSICKIICLAVRRLSSRLESGDLPAPSERICYYEGDLTSTYFGLDTTTWTSIFHETDAVIHNGSDTSHLKYYSALKQANVESTKQLVSTCLQRMIPLHYISSAGVALFAGLAAFPPISCTQTGKTPPADGSHGYMCGKWVCEKMLERTHEKHRLRIVIQRPSTIIRDGKDATVERAGFDWVNSLLHFAHKTQTVPRVEFNAGAFDLVSVETCCEDVVRELPNRGREGITYVNNVGDVVIPMAQMADVGLSKVEKRYSVLPMEEWTKIVVNAGMHPAVAALIETFDEPGVEKYPALLRSEDA.

The Ketosynthase family 3 (KS3) domain occupies 8–441 (NEPIAIVGSG…GTNAHAIVES (434 aa)). Residues cysteine 181, histidine 320, and histidine 361 each act as for beta-ketoacyl synthase activity in the active site. An acyl transferase (AT) domain region spans residues 553–875 (VFTGQGAQYA…PYHGTLLRGG (323 aa)). Residues 948-1081 (HQLLGDVSPD…GELKVVLVDE (134 aa)) are N-terminal hotdog fold. Positions 948–1257 (HQLLGDVSPD…FKPVGSDASN (310 aa)) constitute a PKS/mFAS DH domain. The tract at residues 971 to 1255 (PREMTWLEGH…VKFKPVGSDA (285 aa)) is dehydratase (DH) domain. Catalysis depends on histidine 980, which acts as the Proton acceptor; for dehydratase activity. Positions 1098–1257 (MIPVQPSRLY…FKPVGSDASN (160 aa)) are C-terminal hotdog fold. The active-site Proton donor; for dehydratase activity is the aspartate 1159. The methyltransferase (cMeT) domain stretch occupies residues 1411 to 1596 (KQSTLWVASI…GFSGIDTMSP (186 aa)). Positions 2125–2298 (TYWLVGLSGA…RSSVVNVGAI (174 aa)) are ketoreductase (KR)domain. Residues 2407-2486 (EVANVIKQAY…SLVELAAESI (80 aa)) enclose the Carrier domain. At serine 2445 the chain carries O-(pantetheine 4'-phosphoryl)serine. Positions 2492 to 2543 (PGVPQANANPNGPSSPDSDATESSNQNSDVDVTSTRATSPSTPAATSPDSNV) are disordered. Residues 2497 to 2523 (ANANPNGPSSPDSDATESSNQNSDVDV) are compositionally biased toward polar residues. Positions 2524–2541 (TSTRATSPSTPAATSPDS) are enriched in low complexity. The interval 2585–2817 (LTGCSGLLGH…DLVSVETCCE (233 aa)) is reductase (R) domain.

The cofactor is pantetheine 4'-phosphate.

It catalyses the reaction 7 malonyl-CoA + acetyl-CoA + 10 AH2 + 5 S-adenosyl-L-methionine + 2 H(+) = dehydroprobetaenone I + 10 A + 5 S-adenosyl-L-homocysteine + 7 CO2 + 8 CoA + 6 H2O. It functions in the pathway mycotoxin biosynthesis. Its function is as follows. Highly reducing polyketide synthase; part of the gene cluster that mediates the biosynthesis of betaenones, phytotoxic polyketides involved in leaf spot disease in sugar beets. The first step of the pathway is the synthesis of dehydroprobetaenone I by the polyketide synthase bet1 and the enoyl reductase bet3 via condensation of one acetyl-CoA starter unit with 7 malonyl-CoA units and 5 methylations. The C-terminal reductase (R) domain of bet1 catalyzes the reductive release of the polyketide chain. Because bet1 lacks a designated enoylreductase (ER) domain, the required activity is provided the enoyl reductase bet3. The short-chain dehydrogenase/reductase bet4 then catalyzes reduction of dehydroprobetaenone I to probetaenone I. The cytochrome P450 monooxygenase bet2 catalyzes successive epoxidation, oxidation (resulting from epoxide opening) and hydroxylation to install a tertiary alcohol in the decaline ring to yield betaenone C from dehydroprobetaenone I and betaenone B from probetaenone I. The FAD-linked oxidoreductase (orf1) is probably responsible for the conversion of betaenone C to betaenone A via an intramolecular aldol reaction between C-1 and C-17 to form the bridged tricyclic system in betaenone A. The sequence is that of Highly reducing polyketide synthase bet1 from Neocamarosporium betae (Beet black rot fungus).